We begin with the raw amino-acid sequence, 786 residues long: Myosin light chain kinase 3 (786 aa).

The residue at position 155 (Ser-155) is a Phosphoserine. Disordered stretches follow at residues 233-258 (EALD…SEDT), 279-315 (RMSQ…IHSD), and 333-443 (ELFE…GRRV). Polar residues predominate over residues 279–293 (RMSQSAGEGTSSSKP). Ser-341 and Ser-422 each carry phosphoserine. The Protein kinase domain occupies 482–737 (VSQHEVLGGG…ATQCLKHEWL (256 aa)). Residues 488–496 (LGGGRFGQV) and Lys-511 contribute to the ATP site. Asp-603 (proton acceptor) is an active-site residue.

It belongs to the protein kinase superfamily. CAMK Ser/Thr protein kinase family. It depends on Mg(2+) as a cofactor. Post-translationally, phosphorylated on serine residues. As to expression, expressed in cardiomyocytes (at protein level). Up-regulated in heart after experimental myocardial infarction at the mRNA level.

The protein localises to the cytoplasm. The enzyme catalyses L-seryl-[myosin light chain] + ATP = O-phospho-L-seryl-[myosin light chain] + ADP + H(+). It carries out the reaction L-threonyl-[myosin light chain] + ATP = O-phospho-L-threonyl-[myosin light chain] + ADP + H(+). Functionally, calmodulin-dependent kinase that phosphorylates MYL2 in vitro. Promotes sarcomere formation in cardiomyocytes. Increases cardiomyocyte contractility. The protein is Myosin light chain kinase 3 (Mylk3) of Rattus norvegicus (Rat).